The sequence spans 132 residues: Cytochrome c' (132 aa).

The heme c site is built by Arg-10, Gln-11, Asp-65, Cys-122, Cys-125, and His-126.

Post-translationally, binds 1 heme c group covalently per subunit.

Cytochrome c' is the most widely occurring bacterial c-type cytochrome. Cytochromes c' are high-spin proteins and the heme has no sixth ligand. Their exact function is not known. This is Cytochrome c' from Halomonas halodenitrificans (strain ATCC 12084 / NCIMB 8669) (Paracoccus halodenitrificans).